Consider the following 141-residue polypeptide: Large ribosomal subunit protein uL11 (141 aa).

This sequence belongs to the universal ribosomal protein uL11 family. Part of the ribosomal stalk of the 50S ribosomal subunit. Interacts with L10 and the large rRNA to form the base of the stalk. L10 forms an elongated spine to which L12 dimers bind in a sequential fashion forming a multimeric L10(L12)X complex. One or more lysine residues are methylated.

In terms of biological role, forms part of the ribosomal stalk which helps the ribosome interact with GTP-bound translation factors. The protein is Large ribosomal subunit protein uL11 of Pelodictyon phaeoclathratiforme (strain DSM 5477 / BU-1).